A 502-amino-acid polypeptide reads, in one-letter code: ATP synthase subunit alpha, chloroplastic (502 aa).

170 to 177 (GDRQTGKT) contacts ATP.

It belongs to the ATPase alpha/beta chains family. In terms of assembly, F-type ATPases have 2 components, CF(1) - the catalytic core - and CF(0) - the membrane proton channel. CF(1) has five subunits: alpha(3), beta(3), gamma(1), delta(1), epsilon(1). CF(0) has four main subunits: a, b, b' and c.

The protein resides in the plastid. It localises to the chloroplast thylakoid membrane. The enzyme catalyses ATP + H2O + 4 H(+)(in) = ADP + phosphate + 5 H(+)(out). Functionally, produces ATP from ADP in the presence of a proton gradient across the membrane. The alpha chain is a regulatory subunit. This is ATP synthase subunit alpha, chloroplastic from Rhodomonas salina (Cryptomonas salina).